The sequence spans 284 residues: NADH-cytochrome b5 reductase 1 (284 aa).

A helical transmembrane segment spans residues 8 to 28 (PLFVFSTIAIIISTFVIFYFV). An FAD-binding FR-type domain is found at 41 to 144 (DTFQKFPLIE…RGPKGFFTYT (104 aa)). Residues 124 to 139 (DSKK…GPKG) and 150 to 182 (SFGM…KISL) contribute to the FAD site.

The protein belongs to the flavoprotein pyridine nucleotide cytochrome reductase family. Monomer. Component of the 2-(3-amino-3-carboxypropyl)histidine synthase complex composed of DPH1, DPH2, DPH3 and a NADH-dependent reductase, predominantly CBR1. The cofactor is FAD.

It is found in the mitochondrion outer membrane. It carries out the reaction 2 Fe(III)-[cytochrome b5] + NADH = 2 Fe(II)-[cytochrome b5] + NAD(+) + H(+). The catalysed reaction is 2 Fe(3+)-[Dph3] + NADH = 2 Fe(2+)-[Dph3] + NAD(+) + H(+). Its pathway is protein modification; peptidyl-diphthamide biosynthesis. In terms of biological role, NADH-dependent reductase for DPH3 and cytochrome b5. Required for the first step of diphthamide biosynthesis, a post-translational modification of histidine which occurs in elongation factor 2. DPH1 and DPH2 transfer a 3-amino-3-carboxypropyl (ACP) group from S-adenosyl-L-methionine (SAM) to a histidine residue, the reaction is assisted by a reduction system comprising DPH3 and a NADH-dependent reductase, predominantly CBR1. By reducing DPH3, also involved in the formation of the tRNA wobble base modification mcm5s 2U (5-methoxycarbonylmethyl-2-thiouridine), mediated by the elongator complex. The cytochrome b5/NADH cytochrome b5 reductase electron transfer system supports the catalytic activity of several sterol biosynthetic enzymes. The sequence is that of NADH-cytochrome b5 reductase 1 (CBR1) from Scheffersomyces stipitis (strain ATCC 58785 / CBS 6054 / NBRC 10063 / NRRL Y-11545) (Yeast).